Here is a 322-residue protein sequence, read N- to C-terminus: Undecaprenyl-phosphate 4-deoxy-4-formamido-L-arabinose transferase (322 aa).

At 1–235 (MFEIHPVKKV…TCLTTTPLRM (235 aa)) the chain is on the cytoplasmic side. Residues 236–256 (LSLLGSIIAIGGFSIAVLLVI) traverse the membrane as a helical segment. At 257 to 269 (LRLTFGPQWAAEG) the chain is on the periplasmic side. Residues 270 to 290 (VFMLFAVLFTFIGAQFIGMGL) traverse the membrane as a helical segment. The Cytoplasmic segment spans residues 291–322 (LGEYIGRIYTDVRARPRYFVQQVIRPSSKENE).

The protein belongs to the glycosyltransferase 2 family.

Its subcellular location is the cell inner membrane. It carries out the reaction UDP-4-deoxy-4-formamido-beta-L-arabinose + di-trans,octa-cis-undecaprenyl phosphate = 4-deoxy-4-formamido-alpha-L-arabinopyranosyl di-trans,octa-cis-undecaprenyl phosphate + UDP. It functions in the pathway glycolipid biosynthesis; 4-amino-4-deoxy-alpha-L-arabinose undecaprenyl phosphate biosynthesis; 4-amino-4-deoxy-alpha-L-arabinose undecaprenyl phosphate from UDP-4-deoxy-4-formamido-beta-L-arabinose and undecaprenyl phosphate: step 1/2. The protein operates within bacterial outer membrane biogenesis; lipopolysaccharide biosynthesis. In terms of biological role, catalyzes the transfer of 4-deoxy-4-formamido-L-arabinose from UDP to undecaprenyl phosphate. The modified arabinose is attached to lipid A and is required for resistance to polymyxin and cationic antimicrobial peptides. The polypeptide is Undecaprenyl-phosphate 4-deoxy-4-formamido-L-arabinose transferase (Shigella flexneri serotype 5b (strain 8401)).